The primary structure comprises 921 residues: Alanine--tRNA ligase (921 aa).

Residues His602, His606, Cys706, and His710 each contribute to the Zn(2+) site.

This sequence belongs to the class-II aminoacyl-tRNA synthetase family. The cofactor is Zn(2+).

It localises to the cytoplasm. The catalysed reaction is tRNA(Ala) + L-alanine + ATP = L-alanyl-tRNA(Ala) + AMP + diphosphate. Catalyzes the attachment of alanine to tRNA(Ala) in a two-step reaction: alanine is first activated by ATP to form Ala-AMP and then transferred to the acceptor end of tRNA(Ala). Also edits incorrectly charged Ser-tRNA(Ala) and Gly-tRNA(Ala) via its editing domain. The chain is Alanine--tRNA ligase from Hyperthermus butylicus (strain DSM 5456 / JCM 9403 / PLM1-5).